We begin with the raw amino-acid sequence, 475 residues long: MSATAAARKRGKPASGAGAGAGAGKRRRKADSAGDRGKSKGGGKMNEEISSDSESESLAPRKPEEEEEEELEETAQEKKLRLAKLYLEQLRQQEEEKAEARAFEEDQVAGRLKEDVLEQRGRLQKLVAKEIQAPASADIRVLRGHQLSITCLVVTPDDSAIFSAAKDCSIIKWSVESGRKLHVIPRAKKGAEGKPPGHSSHVLCMAISSDGKYLASGDRSKLILIWEAQSCQHLYTFTGHRDAVSGLAFRRGTHQLYSTSHDRSVKVWNVAENSYVETLFGHQDAVAALDALSRECCVTAGGRDGTVRVWKIPEESQLVFYGHQGSIDCIHLINEEHMVSGADDGSVALWGLSKKRPLALQREAHGLRGEPGLEQPFWISSVAALLNTDLVATGSHSSCVRLWQCGEGFRQLDLLCDIPLVGFINSLKFSSSGDFLVAGVGQEHRLGRWWRIKEARNSVCIIPLRRVPVPPAAGS.

Residues 1-75 are disordered; it reads MSATAAARKR…EEEEELEETA (75 aa). A Nuclear localization signal motif is present at residues 8-40; that stretch reads RKRGKPASGAGAGAGAGKRRRKADSAGDRGKSK. At R10 the chain carries Omega-N-methylarginine. K12 and K25 each carry N6-acetyllysine. A phosphoserine mark is found at S50, S51, S53, and S57. Residues 65–74 show a composition bias toward acidic residues; it reads EEEEEELEET. K113 participates in a covalent cross-link: Glycyl lysine isopeptide (Lys-Gly) (interchain with G-Cter in SUMO2). WD repeat units follow at residues 144–183, 197–236, 239–278, 281–320, 322–360, 374–413, and 419–460; these read GHQLSITCLVVTPDDSAIFSAAKDCSIIKWSVESGRKLHV, GHSSHVLCMAISSDGKYLASGDRSKLILIWEAQSCQHLYT, GHRDAVSGLAFRRGTHQLYSTSHDRSVKVWNVAENSYVET, GHQDAVAALDALSRECCVTAGGRDGTVRVWKIPEESQLVF, GHQGSIDCIHLINEEHMVSGADDGSVALWGLSKKRPLAL, EQPFWISSVAALLNTDLVATGSHSSCVRLWQCGEGFRQLD, and PLVG…NSVC.

This sequence belongs to the WD repeat RRP9 family. Interacts specifically with the U3 small nucleolar RNA (U3 snoRNA). Binds a sub-fragment of the U3 snoRNA surrounding the B/C motif (3UBC). This association with the U3BC RNA is dependent on the binding of a protein called 15.5K to the box B/C motif. The association of the protein with the U3BC RNA was found to be also dependent on a conserved RNA structure that flanks the box B/C motif. Part of the small subunit (SSU) processome, composed of more than 70 proteins and the RNA chaperone small nucleolar RNA (snoRNA) U3. In terms of processing, acetylation at Lys-12 and Lys-25 by KAT2B/PCAF under stress impairs pre-rRNA processing. Deacetylation by SIRT7 enhances RRP9-binding to U3 snoRNA, which is a prerequisite for pre-rRNA processing.

The protein localises to the nucleus. The protein resides in the nucleolus. In terms of biological role, component of a nucleolar small nuclear ribonucleoprotein particle (snoRNP) thought to participate in the processing and modification of pre-ribosomal RNA (pre-rRNA). Part of the small subunit (SSU) processome, first precursor of the small eukaryotic ribosomal subunit. During the assembly of the SSU processome in the nucleolus, many ribosome biogenesis factors, an RNA chaperone and ribosomal proteins associate with the nascent pre-rRNA and work in concert to generate RNA folding, modifications, rearrangements and cleavage as well as targeted degradation of pre-ribosomal RNA by the RNA exosome. The sequence is that of U3 small nucleolar RNA-interacting protein 2 from Homo sapiens (Human).